Consider the following 480-residue polypeptide: MNTHPQTSPNTHYKIADISLADWGRKEIDIAEHEMPGLMSIRRKYASKQPLKGVRVTGSLHMTIQTAVLIETLKDIGANVRWASCNIFSTQDHAAAAIATSGTPVFAWKGETLEEYWDCTLQALTFTLADGTLTGPELIVDDGGDATLLIHKGYELENGSTWVDEPSDSLEEQVIKRLLKRIAIERPGYWTRVVNDWKGVSEETTTGVHRLYQIAATGRLLVPAINVNDSVTKSKFDNLYGCRESLADGLKRAMDVMLAGKLAVVCGYGDVGKGSAHSLRAYGARVIVTEIDPICALQAAMEGFEVRTVEDTLGQADIYVTTTGNKDVIRIEHMTAMKDQVIVCNIGHFDNEIQVDALNTLTGVQKINIKPQVDKFILPNGNTLFLLAEGRLVNLGCATGHPSFVMSNSFANQTLAQIDLWQNKDVYEKNVYRLPKKLDEEVARLHLEKIGVKLTTLTANQAAYLGISVEGPFKPEHYRY.

3 residues coordinate substrate: Thr-63, Asp-142, and Glu-203. 204–206 (TTT) provides a ligand contact to NAD(+). Substrate contacts are provided by Lys-233 and Asp-237. Residues Asn-238, 267 to 272 (GYGDVG), Glu-290, Asn-325, 346 to 348 (IGH), and Asn-394 each bind NAD(+).

It belongs to the adenosylhomocysteinase family. Requires NAD(+) as cofactor.

It localises to the cytoplasm. It carries out the reaction S-adenosyl-L-homocysteine + H2O = L-homocysteine + adenosine. The protein operates within amino-acid biosynthesis; L-homocysteine biosynthesis; L-homocysteine from S-adenosyl-L-homocysteine: step 1/1. Functionally, may play a key role in the regulation of the intracellular concentration of adenosylhomocysteine. The protein is Adenosylhomocysteinase of Xylella fastidiosa (strain M12).